We begin with the raw amino-acid sequence, 464 residues long: Myrosinase 1 (464 aa).

Gln19 is a binding site for substrate. Residues His39 and Asp52 each coordinate Zn(2+). His122 and Asn166 together coordinate substrate. Residue Glu167 is the Nucleophile of the active site. Glu374 serves as the catalytic Proton donor. A glycan (N-linked (GlcNAc...) asparagine) is linked at Asn397.

Homodimer. Expressed in the skeletal muscle tissues surrounding the head, abdomen and thorax. Not expressed in flight muscles (at protein level).

It catalyses the reaction a thioglucoside + H2O = a sugar + a thiol.. In terms of biological role, hydrolyzes glucosinolates to a labile aglycone. This rapidly undergoes spontaneous rearrangement, eliminating sulfur to yield a number of toxic metabolites. Thereby developing a chemical defense system that exploits and mimics the host plant. This is Myrosinase 1 from Brevicoryne brassicae (Mealy cabbage aphid).